The sequence spans 513 residues: V-type proton ATPase subunit B (513 aa).

R375 provides a ligand contact to ATP. A compositionally biased stretch (basic and acidic residues) spans 484–503; that stretch reads ADRKGKGKDKPTTKDTRDTA. A disordered region spans residues 484–513; it reads ADRKGKGKDKPTTKDTRDTAAPEEENLIDA. Positions 504 to 513 are enriched in acidic residues; it reads APEEENLIDA.

This sequence belongs to the ATPase alpha/beta chains family. V-ATPase is a heteromultimeric enzyme composed of a peripheral catalytic V1 complex (components A to H) attached to an integral membrane V0 proton pore complex (components: a, c, c', c'', d, e, f and VOA1).

It localises to the vacuole membrane. Functionally, non-catalytic subunit of the V1 complex of vacuolar(H+)-ATPase (V-ATPase), a multisubunit enzyme composed of a peripheral complex (V1) that hydrolyzes ATP and a membrane integral complex (V0) that translocates protons. V-ATPase is responsible for acidifying and maintaining the pH of intracellular compartments. The chain is V-type proton ATPase subunit B from Neurospora crassa (strain ATCC 24698 / 74-OR23-1A / CBS 708.71 / DSM 1257 / FGSC 987).